The following is a 217-amino-acid chain: Large ribosomal subunit protein bL25 (217 aa).

Low complexity predominate over residues 195–211; that stretch reads PAEGAAAAPAKGAAKGA. The interval 195–217 is disordered; the sequence is PAEGAAAAPAKGAAKGAAKGGKK.

Belongs to the bacterial ribosomal protein bL25 family. CTC subfamily. In terms of assembly, part of the 50S ribosomal subunit; part of the 5S rRNA/L5/L18/L25 subcomplex. Contacts the 5S rRNA. Binds to the 5S rRNA independently of L5 and L18.

This is one of the proteins that binds to the 5S RNA in the ribosome where it forms part of the central protuberance. The chain is Large ribosomal subunit protein bL25 from Acidiphilium cryptum (strain JF-5).